The primary structure comprises 399 residues: Phosphatidate cytidylyltransferase 5, chloroplastic (399 aa).

The transit peptide at methionine 1–arginine 26 directs the protein to the chloroplast. The next 6 helical transmembrane spans lie at valine 123–leucine 143, phenylalanine 187–leucine 207, leucine 217–leucine 237, valine 266–phenylalanine 286, alanine 309–tryptophan 329, and leucine 333–threonine 353.

Belongs to the CDS family. Mg(2+) serves as cofactor.

Its subcellular location is the plastid. The protein localises to the chloroplast membrane. It catalyses the reaction a 1,2-diacyl-sn-glycero-3-phosphate + CTP + H(+) = a CDP-1,2-diacyl-sn-glycerol + diphosphate. Its pathway is phospholipid metabolism; CDP-diacylglycerol biosynthesis; CDP-diacylglycerol from sn-glycerol 3-phosphate: step 3/3. Its activity is regulated as follows. Highest activities is obtained at about 30 mM CTP and 2 mM phosphatidic acid (PA). May be involved in the synthesis of minor phospholipids and in modulation of IP3-mediated signal transduction. Promotes the biosynthesis of plastidial phosphatidylglycerol (PG) which is required for structure and function of thylakoid membranes and, hence, for photoautotrophic growth. This chain is Phosphatidate cytidylyltransferase 5, chloroplastic, found in Arabidopsis thaliana (Mouse-ear cress).